The following is a 292-amino-acid chain: 33 kDa chaperonin (292 aa).

Disulfide bonds link Cys-230-Cys-232 and Cys-263-Cys-266.

It belongs to the HSP33 family. Under oxidizing conditions two disulfide bonds are formed involving the reactive cysteines. Under reducing conditions zinc is bound to the reactive cysteines and the protein is inactive.

It is found in the cytoplasm. Its function is as follows. Redox regulated molecular chaperone. Protects both thermally unfolding and oxidatively damaged proteins from irreversible aggregation. Plays an important role in the bacterial defense system toward oxidative stress. The chain is 33 kDa chaperonin from Escherichia coli O17:K52:H18 (strain UMN026 / ExPEC).